The sequence spans 119 residues: Large ribosomal subunit protein uL22 (119 aa).

The protein belongs to the universal ribosomal protein uL22 family. In terms of assembly, part of the 50S ribosomal subunit.

Functionally, this protein binds specifically to 23S rRNA; its binding is stimulated by other ribosomal proteins, e.g. L4, L17, and L20. It is important during the early stages of 50S assembly. It makes multiple contacts with different domains of the 23S rRNA in the assembled 50S subunit and ribosome. In terms of biological role, the globular domain of the protein is located near the polypeptide exit tunnel on the outside of the subunit, while an extended beta-hairpin is found that lines the wall of the exit tunnel in the center of the 70S ribosome. The polypeptide is Large ribosomal subunit protein uL22 (Rhodopirellula baltica (strain DSM 10527 / NCIMB 13988 / SH1)).